Consider the following 89-residue polypeptide: Elongation factor 1-beta (89 aa).

The protein belongs to the EF-1-beta/EF-1-delta family.

In terms of biological role, promotes the exchange of GDP for GTP in EF-1-alpha/GDP, thus allowing the regeneration of EF-1-alpha/GTP that could then be used to form the ternary complex EF-1-alpha/GTP/AAtRNA. This chain is Elongation factor 1-beta, found in Methanococcus aeolicus (strain ATCC BAA-1280 / DSM 17508 / OCM 812 / Nankai-3).